A 652-amino-acid chain; its full sequence is Protein high chlorophyll fluorescent 107 (652 aa).

2 disordered regions span residues 1-21 (MHFF…NTSS) and 78-121 (VFSP…EGKK). The N-terminal 68 residues, 1–68 (MHFFFVPNSS…TFSSKNTYLY (68 aa)), are a transit peptide targeting the chloroplast. Residues 105-121 (PLLENSDKESSEEEGKK) are compositionally biased toward basic and acidic residues. 12 TPR repeats span residues 168 to 201 (LDLS…WPED), 202 to 235 (GRPY…TQGE), 237 to 270 (SYIW…DKKH), 271 to 304 (VAAW…CGRN), 305 to 338 (EYIY…NSRS), 339 to 372 (CASW…SPKN), 374 to 406 (FAWH…NPRD), 407 to 440 (PVLL…DPRH), 441 to 474 (QPVW…DANT), 478 to 511 (SRCL…NSQS), 543 to 576 (TEVV…GQNN), and 598 to 631 (QQPE…DPLK). Residues 585–610 (LRNMNRTKDSQSNQQPESSAGREDIE) form a disordered region.

As to quaternary structure, may form homomultimers. Part of a multi-subunit complex in the range of 60-190 and 600-800 kDa in chloroplast membranes.

The protein localises to the plastid. The protein resides in the chloroplast. It is found in the chloroplast membrane. It localises to the chloroplast stroma. In terms of biological role, involved, directly or indirectly, in the processing of chloroplast encoded mRNAs. Exhibits sequence-specific RNA binding and RNA remodeling activities, probably leading to the activation of translation of the target gene cluster psbB-psbT-psbH-petB-petD. Blocks 5'-3' and 3'-5' exoribonucleases (e.g. polynucleotide phosphorylase (PNPase), RNase R) in vitro. Necessary for intercistronic RNA processing of the psbH 5' untranslated region or the stabilization of 5' processed psbH RNAs. Also required for the synthesis of psbB. This Arabidopsis thaliana (Mouse-ear cress) protein is Protein high chlorophyll fluorescent 107.